The following is a 607-amino-acid chain: WD repeat-containing protein 1-B (607 aa).

13 WD repeats span residues 4 to 45 (EIKK…IRNI), 48 to 87 (PAIADIYTEHAHQVVVARYAPSGFYIASGDTSGKLRIWDT), 93 to 135 (LLKY…LWDT), 138 to 176 (SVGEIIGNIKVINSVDIKQTRPYRLVTGSDDNCCAFFEG), 180 to 218 (KFKFTMSDHSRFVNCVRFSPDGSRLASAGADGQIFLYDG), 224 to 263 (VCSLGGSKAHDGGIYAVSWSPDGTQLLSASGDKTAKIWDV), 270 to 306 (TTFNLGSDVLDQQLGCLWQKDYLLSVSLSGYINYLDK), 311 to 351 (KPFR…YWDA), 358 to 408 (TFTG…KMDV), 432 to 474 (LKDK…LYSI), 480 to 518 (KDEGKTLPAKGAVTDLAYSPDGAFLAVTDANKVVTVFSV), 523 to 561 (SEHNSYYGHHAKALSVAWSPDNEHFASSGMDMMVYVWTL), and 566 to 604 (TRIKMPDAHRLHHVSSLAWLDENTLATVSHDACVKQWTV).

Belongs to the WD repeat AIP1 family.

It is found in the cell membrane. The protein localises to the cytoplasm. The protein resides in the cytoskeleton. It localises to the nucleus. Its function is as follows. Induces disassembly of actin filaments in conjunction with ADF/cofilin family proteins. Doesn't sever actin filaments alone, but caps the barbed ends of filaments severed by cofilin, which blocks annealing and depolymerization and allows more extensive severing by cofilin. This chain is WD repeat-containing protein 1-B (wdr1-b), found in Xenopus laevis (African clawed frog).